The chain runs to 595 residues: MNGLIKHKLELLPSNPGCYLHKDKFGNIIYVGKAKNLKNRVRSYFRGSHDTKTELLVSEIADFEFIVTESNIEALLLEINLIQENMPKFNIRLKDGKSYPFIKITKELYPRLLITRQVKKDGGLYFGPYPDSGAANEIKKLLDRIFPFKKCKNPANKVCFYYHIGQCNAHTICHTTEDYWQGLVEDVKNFLNGHDDKIVNQLKAKMKDMSDQMAFERAAEYRDLIEAVSTLRTKQRVIRQDMQDRDIFGYYVDKGWMCVQVFFVRQGKLIQRDVNMFPYYNDAEEDFLTYMGQFYLDSRHLKPKEIFIPGDIDQESVEALVGDEVKVFKPKRGEKKQLVNLATKNARVSLTQKFDLLEKDIAKTQGAIENLGKLMGIPTPVRIESFDNSNIMGTSPVSAMVVFENGKPNKKEYRKYKIKTVEGPDDYASMREVIRRRYSRVKRDGLTPPDLIIMDGGQGQVNVAKDVLRNELNLSIPVAGLQKNDKHQTNELLFGDPLRVIDLPRQSEEFFLLHRIQDEVHRFAITFHRQVRSKNSFSSKLDGVEGLGPKRKQKLLKNFKSMTAIQQASVEDIQALGIPKKVAQALLDKLSQDSH.

A GIY-YIG domain is found at S14–I91. A UVR domain is found at D196–L231.

Belongs to the UvrC family. Interacts with UvrB in an incision complex.

The protein localises to the cytoplasm. Functionally, the UvrABC repair system catalyzes the recognition and processing of DNA lesions. UvrC both incises the 5' and 3' sides of the lesion. The N-terminal half is responsible for the 3' incision and the C-terminal half is responsible for the 5' incision. The sequence is that of UvrABC system protein C from Streptococcus thermophilus (strain ATCC BAA-491 / LMD-9).